The chain runs to 34 residues: Toxin GTx1-15 (34 aa).

3 disulfide bridges follow: Cys-2–Cys-17, Cys-9–Cys-23, and Cys-16–Cys-30. A Phenylalanine amide modification is found at Phe-34.

The protein belongs to the neurotoxin 10 (Hwtx-1) family. 08 (Gtx1-15) subfamily. As to expression, expressed by the venom gland.

It is found in the secreted. Its function is as follows. Potent voltage-gated sodium channel blocker. Potently inhibits the voltage-gated sodium channels Nav1.7/SCN9A (IC(50)=0.58-10 nM). Also shows a moderate activity on Nav1.1/SCN1A (IC(50)=6 nM), Nav1.2/SCN2A (IC(50)=5-128 nM), Nav1.3/SCN3A (IC(50)=20.3-170 nM), and Nav1.6/SCN8A (IC(50)=17-20.1 nM). Shows an unclear inhibition of Nav1.4/SCN4A (IC(50)=200 nM to &gt;10 uM), Nav1.5/SCN5A (IC(50)=140 nM to &gt;10 uM) and Nav1.8/SCN10A (IC(50)=68-12200 nM). Weakly blocks the low voltage-gated calcium channels Cav3.1/CACNA1G (30% inhibition of the peak current at 9.8 nM). shows moderate affinity for lipid bilayers. In vivo, when tested on the OD1-induced mouse model of Nav1.7/SCN9A-mediated pain, the toxin is effective when co-administered with OD1, but lacks efficacy when delivered systemically. This chain is Toxin GTx1-15, found in Grammostola porteri (Tarantula spider).